We begin with the raw amino-acid sequence, 101 residues long: Protein S100-A7 (101 aa).

The residue at position 2 (Ser2) is an N-acetylserine. EF-hand domains lie at Met13 to Asp48 and Lys50 to Asp85. Residues His18 and Asp25 each contribute to the Zn(2+) site. Cys47 and Cys96 form a disulfide bridge. Asp63, Asn65, Asp67, Lys69, and Glu74 together coordinate Ca(2+). His87 and His91 together coordinate Zn(2+).

As to quaternary structure, interacts with RANBP9. Fetal ear, skin, and tongue and human cell lines. Highly up-regulated in psoriatic epidermis. Also highly expressed in the urine of bladder squamous cell carcinoma (SCC) bearing patients.

It localises to the cytoplasm. The protein localises to the secreted. This chain is Protein S100-A7 (S100A7), found in Homo sapiens (Human).